Consider the following 42-residue polypeptide: Phospholipase A1 (42 aa).

This sequence belongs to the AB hydrolase superfamily. Lipase family. Contains six disulfide bonds. As to expression, expressed by the venom gland.

It is found in the secreted. It catalyses the reaction a 1,2-diacyl-sn-glycero-3-phosphocholine + H2O = a 2-acyl-sn-glycero-3-phosphocholine + a fatty acid + H(+). Functionally, catalyzes the hydrolysis of phosphatidylcholine with phospholipase A1 activity. May act as an allergen and induce hemolytic activity. This is Phospholipase A1 from Polistes gallicus (Paper wasp).